We begin with the raw amino-acid sequence, 365 residues long: Eukaryotic translation initiation factor 3 subunit H (365 aa).

The MPN domain maps to 15-166 (ILLDSLVVMK…LRAWRLSTAA (152 aa)).

The protein belongs to the eIF-3 subunit H family. As to quaternary structure, component of the eukaryotic translation initiation factor 3 (eIF-3) complex.

The protein localises to the cytoplasm. Its function is as follows. Component of the eukaryotic translation initiation factor 3 (eIF-3) complex, which is involved in protein synthesis of a specialized repertoire of mRNAs and, together with other initiation factors, stimulates binding of mRNA and methionyl-tRNAi to the 40S ribosome. The eIF-3 complex specifically targets and initiates translation of a subset of mRNAs involved in cell proliferation. This chain is Eukaryotic translation initiation factor 3 subunit H, found in Caenorhabditis elegans.